We begin with the raw amino-acid sequence, 104 residues long: Astakine (104 aa).

The N-terminal stretch at 1-22 (MKMRGVSVGVLVVAMMSGLAMA) is a signal peptide. Cystine bridges form between C25–C38, C32–C50, C37–C76, C60–C84, and C78–C91.

Belongs to the AVIT (prokineticin) family.

The protein resides in the secreted. Its function is as follows. Cytokine directly involved in hematopoiesis. The chain is Astakine from Pacifastacus leniusculus (Signal crayfish).